The following is a 692-amino-acid chain: Elongation factor G (692 aa).

Positions 8-282 (EKVRNIGIAA…AVVDYLPAPT (275 aa)) constitute a tr-type G domain. Residues 17–24 (AHIDAGKT), 81–85 (DTPGH), and 135–138 (NKMD) contribute to the GTP site.

Belongs to the TRAFAC class translation factor GTPase superfamily. Classic translation factor GTPase family. EF-G/EF-2 subfamily.

It localises to the cytoplasm. In terms of biological role, catalyzes the GTP-dependent ribosomal translocation step during translation elongation. During this step, the ribosome changes from the pre-translocational (PRE) to the post-translocational (POST) state as the newly formed A-site-bound peptidyl-tRNA and P-site-bound deacylated tRNA move to the P and E sites, respectively. Catalyzes the coordinated movement of the two tRNA molecules, the mRNA and conformational changes in the ribosome. The protein is Elongation factor G of Trichormus variabilis (strain ATCC 29413 / PCC 7937) (Anabaena variabilis).